The following is a 321-amino-acid chain: Olfactory receptor 5K4 (321 aa).

Residues 1 to 25 (MARENHSLAAEFILIGFTNYPELKT) lie on the Extracellular side of the membrane. An N-linked (GlcNAc...) asparagine glycan is attached at asparagine 5. A helical membrane pass occupies residues 26–46 (LLFVVFSAIYLVTMVGNLGLV). Residues 47-54 (ALIYVERR) lie on the Cytoplasmic side of the membrane. A helical membrane pass occupies residues 55-75 (LLTPMYIFLGNLALMDSCCSC). Residues 76 to 97 (AVTPKMLENFFSEDRIISLYEC) are Extracellular-facing. An intrachain disulfide couples cysteine 97 to cysteine 179. The chain crosses the membrane as a helical span at residues 98-118 (MAQFYFLCLAETTDCFLLATM). At 119 to 139 (AYDRYVAICHPLQYHTMMSKT) the chain is on the cytoplasmic side. A helical transmembrane segment spans residues 140-160 (LCIRMTTGAFKAGNLHSMIHV). Residues 161 to 205 (GLLLRLTFCRSNKIHHFFCDILPLYRLSCTDPSINELMIYIFSIP) are Extracellular-facing. A helical membrane pass occupies residues 206-226 (IQIFTIATVLISYLCILLTVF). The Cytoplasmic portion of the chain corresponds to 227 to 240 (KMKSKEGRGKAFST). A helical membrane pass occupies residues 241–261 (CASHFLSVSIFYICLLMYIGP). Residues 262 to 268 (SEEGDKD) lie on the Extracellular side of the membrane. Residues 269–289 (TPVAIFYAIVIPLLNPFIYSL) traverse the membrane as a helical segment. Residues 290-321 (RNKEVINVLKKIMRNYNILKQTCSIANLFLIY) are Cytoplasmic-facing.

It belongs to the G-protein coupled receptor 1 family.

The protein localises to the cell membrane. Its function is as follows. Odorant receptor. The chain is Olfactory receptor 5K4 (OR5K4) from Homo sapiens (Human).